The sequence spans 286 residues: uncharacterized protein (286 aa).

The AB hydrolase-1 domain occupies 26-268; sequence PLIILCHGFC…DACHYDIYEG (243 aa).

To E.coli YcjY.

This is an uncharacterized protein from Escherichia coli.